The chain runs to 64 residues: Alpha-toxin Ts5 (64 aa).

Residues Lys-2–Cys-64 form the LCN-type CS-alpha/beta domain. 4 disulfides stabilise this stretch: Cys-12–Cys-64, Cys-16–Cys-38, Cys-24–Cys-44, and Cys-28–Cys-46.

Belongs to the long (4 C-C) scorpion toxin superfamily. Sodium channel inhibitor family. Alpha subfamily. As to expression, expressed by the venom gland.

The protein resides in the secreted. Functionally, alpha toxins bind voltage-independently at site-3 of sodium channels (Nav) and inhibit the inactivation of the activated channels, thereby blocking neuronal transmission. By extending the depolarized period it indirectly affects beta-cell voltage-dependent potassium channels, thus increasing potassium permeability. The polypeptide is Alpha-toxin Ts5 (Tityus serrulatus (Brazilian scorpion)).